Reading from the N-terminus, the 237-residue chain is Cytochrome c oxidase subunit 2 (237 aa).

The Mitochondrial intermembrane segment spans residues 1 to 30 (MNLVAPTPWGLFFQDSATPQMEGIEELHNN). Residues 31 to 51 (IMFYLTIILFSVTWMMITIIK) form a helical membrane-spanning segment. Topologically, residues 52–67 (SFVNTKSPISHKYMNH) are mitochondrial matrix. The chain crosses the membrane as a helical span at residues 68–94 (GTLIELIWTITPAVILILIAFPSFKLL). Over 95–237 (YLMDEVMDPS…SVSLKNFYYD (143 aa)) the chain is Mitochondrial intermembrane. Cu cation contacts are provided by His176, Cys211, Glu213, Cys215, His219, and Met222. Glu213 is a binding site for Mg(2+).

The protein belongs to the cytochrome c oxidase subunit 2 family. Component of the cytochrome c oxidase (complex IV, CIV), a multisubunit enzyme composed of a catalytic core of 3 subunits and several supernumerary subunits. The complex exists as a monomer or a dimer and forms supercomplexes (SCs) in the inner mitochondrial membrane with ubiquinol-cytochrome c oxidoreductase (cytochrome b-c1 complex, complex III, CIII). It depends on Cu cation as a cofactor.

The protein localises to the mitochondrion inner membrane. It carries out the reaction 4 Fe(II)-[cytochrome c] + O2 + 8 H(+)(in) = 4 Fe(III)-[cytochrome c] + 2 H2O + 4 H(+)(out). Its function is as follows. Component of the cytochrome c oxidase, the last enzyme in the mitochondrial electron transport chain which drives oxidative phosphorylation. The respiratory chain contains 3 multisubunit complexes succinate dehydrogenase (complex II, CII), ubiquinol-cytochrome c oxidoreductase (cytochrome b-c1 complex, complex III, CIII) and cytochrome c oxidase (complex IV, CIV), that cooperate to transfer electrons derived from NADH and succinate to molecular oxygen, creating an electrochemical gradient over the inner membrane that drives transmembrane transport and the ATP synthase. Cytochrome c oxidase is the component of the respiratory chain that catalyzes the reduction of oxygen to water. Electrons originating from reduced cytochrome c in the intermembrane space (IMS) are transferred via the dinuclear copper A center (CU(A)) of subunit 2 and heme A of subunit 1 to the active site in subunit 1, a binuclear center (BNC) formed by heme A3 and copper B (CU(B)). The BNC reduces molecular oxygen to 2 water molecules using 4 electrons from cytochrome c in the IMS and 4 protons from the mitochondrial matrix. In Trichophyton rubrum (Athlete's foot fungus), this protein is Cytochrome c oxidase subunit 2 (COX2).